A 208-amino-acid chain; its full sequence is Uridine kinase (208 aa).

11 to 18 (GGTGSGKS) provides a ligand contact to ATP.

It belongs to the uridine kinase family.

Its subcellular location is the cytoplasm. It catalyses the reaction uridine + ATP = UMP + ADP + H(+). The enzyme catalyses cytidine + ATP = CMP + ADP + H(+). Its pathway is pyrimidine metabolism; CTP biosynthesis via salvage pathway; CTP from cytidine: step 1/3. It participates in pyrimidine metabolism; UMP biosynthesis via salvage pathway; UMP from uridine: step 1/1. The protein is Uridine kinase of Clostridium perfringens (strain SM101 / Type A).